A 247-amino-acid polypeptide reads, in one-letter code: Agamous-like MADS-box protein AGL28 (247 aa).

One can recognise an MADS-box domain in the interval 6–66 (LGRRKIELVK…GKAYSFGHPN (61 aa)). Residues 91-168 (TKLRIQMLNE…VDEKVAQLHH (78 aa)) are a coiled coil.

Expressed in roots, leaves and shoot apices.

It is found in the nucleus. Its function is as follows. Probable transcription factor that may function as a floral promoter operating upstream of known floral activators in the autonomous pathway. The sequence is that of Agamous-like MADS-box protein AGL28 from Arabidopsis thaliana (Mouse-ear cress).